The chain runs to 279 residues: Protoheme IX farnesyltransferase (279 aa).

Transmembrane regions (helical) follow at residues 5–25 (LILLKPRVIWLLILASLAGYL), 33–53 (IAQAFSLLLVAFLSTGGAAAF), 84–103 (LAYSLVLSALGIALGFLLLG), 108–125 (LFVFLGWFFYAVVYTVIL), 133–153 (ILGGGFAGNATFLGGYALGAG), 159–179 (AVLISFAIYLWIPSHIWALAY), 201–221 (AAVAIISLLNLASAAYIMTLY), 222–242 (LAFGGGLLGGALVAAGVVATI), and 256–276 (AMWKMYKASSPVLTLFLLALI).

Belongs to the UbiA prenyltransferase family. Protoheme IX farnesyltransferase subfamily.

It localises to the cell membrane. It carries out the reaction heme b + (2E,6E)-farnesyl diphosphate + H2O = Fe(II)-heme o + diphosphate. It functions in the pathway porphyrin-containing compound metabolism; heme O biosynthesis; heme O from protoheme: step 1/1. In terms of biological role, converts heme B (protoheme IX) to heme O by substitution of the vinyl group on carbon 2 of heme B porphyrin ring with a hydroxyethyl farnesyl side group. The sequence is that of Protoheme IX farnesyltransferase from Pyrobaculum arsenaticum (strain DSM 13514 / JCM 11321 / PZ6).